The primary structure comprises 160 residues: MTTHVILVARAFGAKGVYIEGKDEKMVKSILKVIDSWGGSSYFLVKEIENGKSIVNEWKEKGGTIIHLTMYGININDFQDRFEKIKYPLLIIVGAEKVEGWYYHNADYNIAIGNQPHSEVAALAIFLDRIYKGRELYMEFEDAKIKILPQKAGKKVIRSG.

S-adenosyl-L-methionine-binding positions include leucine 68, 94–98 (GAEKV), and 112–119 (IGNQPHSE).

The protein belongs to the aTrm56 family. As to quaternary structure, homodimer.

Its subcellular location is the cytoplasm. It catalyses the reaction cytidine(56) in tRNA + S-adenosyl-L-methionine = 2'-O-methylcytidine(56) in tRNA + S-adenosyl-L-homocysteine + H(+). Its function is as follows. Specifically catalyzes the AdoMet-dependent 2'-O-ribose methylation of cytidine at position 56 in tRNAs. The protein is tRNA (cytidine(56)-2'-O)-methyltransferase of Saccharolobus solfataricus (strain ATCC 35092 / DSM 1617 / JCM 11322 / P2) (Sulfolobus solfataricus).